Reading from the N-terminus, the 314-residue chain is Acetaldehyde dehydrogenase 1 (314 aa).

Position 16–19 (16–19 (SGNI)) interacts with NAD(+). Cysteine 134 serves as the catalytic Acyl-thioester intermediate. NAD(+) contacts are provided by residues 165–173 (SAGPGTRAN) and asparagine 292.

The protein belongs to the acetaldehyde dehydrogenase family.

It catalyses the reaction acetaldehyde + NAD(+) + CoA = acetyl-CoA + NADH + H(+). The chain is Acetaldehyde dehydrogenase 1 (mhpF) from Cupriavidus necator (strain ATCC 17699 / DSM 428 / KCTC 22496 / NCIMB 10442 / H16 / Stanier 337) (Ralstonia eutropha).